Consider the following 192-residue polypeptide: uncharacterized protein (192 aa).

The Nudix hydrolase domain maps to 29–160 (HRQAAVLIPI…PLDIYRRGDS (132 aa)). Residues 67–89 (GAVDDTDTSVIAAALREAEEEVA) carry the Nudix box motif. Residues Glu83 and Glu87 each coordinate Mg(2+).

It belongs to the Nudix hydrolase family. PCD1 subfamily. The cofactor is Mn(2+). Requires Mg(2+) as cofactor.

In terms of biological role, probably mediates the hydrolysis of some nucleoside diphosphate derivatives. This is an uncharacterized protein from Escherichia coli O6:H1 (strain CFT073 / ATCC 700928 / UPEC).